A 75-amino-acid polypeptide reads, in one-letter code: Psi-conotoxin PIIIE (75 aa).

The signal sequence occupies residues 1–19 (MSKLGALLTICLLLFPITA). The propeptide occupies 20 to 50 (LLMDGDQPADRPAERMDYDISSEVHRLLERR). 3 positions are modified to 4-hydroxyproline: proline 52, proline 53, and proline 64. Cystine bridges form between cysteine 54-cysteine 66, cysteine 55-cysteine 71, and cysteine 60-cysteine 72. Glycine 74 carries the glycine amide modification.

Expressed by the venom duct.

The protein resides in the secreted. In terms of biological role, psi-conotoxins act on postsynaptic membranes, and act as non-competitive antagonist of nicotinic acetylcholine receptors (nAChR). Is more toxic than Psi-conotoxin PIIIF. In vivo, has paralytic activity when injected intraperitoneally into goldfish. The polypeptide is Psi-conotoxin PIIIE (Conus purpurascens (Purple cone)).